Consider the following 492-residue polypeptide: 3,6-anhydro-alpha-L-galactose dehydrogenase (492 aa).

NADP(+) is bound by residues 160–161, 184–187, and 237–238; these read WN, KPSE, and GS. Glu-259 acts as the Proton acceptor in catalysis. Leu-260 is a binding site for NADP(+). Cys-293 serves as the catalytic Nucleophile. Position 394 (Glu-394) interacts with NADP(+).

Belongs to the aldehyde dehydrogenase family.

It carries out the reaction 3,6-anhydro-alpha-L-galactopyranose + NADP(+) + H2O = 3,6-anhydro-L-galactonate + NADPH + 2 H(+). Its activity is regulated as follows. Significantly inhibited by EDTA. Activity is enhanced by Fe(2+), but is strongly inhibited by Mn(2+), Cu(2+), Zn(2+), Ni(2+) and Co(2+). In terms of biological role, involved in the degradation of 3,6-anhydro-L-galactose, which is the major monomeric sugar of red macroalgae. Catalyzes the oxidation of 3,6-anhydro-L-galactose (AHG) to form 3,6-anhydrogalactonate (AHGA). Shows broad substrate specificity, with maximum activity toward AHG. The enzyme activities toward D-fructose, D-galactose and D-ribose are between 40% and 50% of the maximum, but those toward L-rhamnose, L-glyceraldehyde, D-glyceraldehyde, L-fucose and D-glucose are much lower. The polypeptide is 3,6-anhydro-alpha-L-galactose dehydrogenase (Streptomyces coelicolor (strain ATCC BAA-471 / A3(2) / M145)).